The primary structure comprises 299 residues: Putative pyrroline-5-carboxylate reductase 4 (299 aa).

The protein belongs to the pyrroline-5-carboxylate reductase family.

The enzyme catalyses L-proline + NADP(+) = (S)-1-pyrroline-5-carboxylate + NADPH + 2 H(+). It carries out the reaction L-proline + NAD(+) = (S)-1-pyrroline-5-carboxylate + NADH + 2 H(+). Its pathway is amino-acid biosynthesis; L-proline biosynthesis; L-proline from L-glutamate 5-semialdehyde: step 1/1. The polypeptide is Putative pyrroline-5-carboxylate reductase 4 (Caenorhabditis elegans).